We begin with the raw amino-acid sequence, 160 residues long: Type IV major fimbrial protein FimA (160 aa).

Residues Met1–Gly7 constitute a propeptide, leader sequence. An N-methylphenylalanine modification is found at Phe8. The chain crosses the membrane as a helical span at residues Phe8–Ile28.

This sequence belongs to the N-Me-Phe pilin family. In terms of assembly, the pili are polar flexible filaments of about 5.4 nanometers diameter and 2.5 micrometers average length; they consist of only a single polypeptide chain arranged in a helical configuration of five subunits per turn in the assembled pilus.

The protein localises to the fimbrium. The protein resides in the membrane. Functionally, major component of the type IV fimbriae that plays an essential role in twitching motility, natural transformation, and protease secretion. The sequence is that of Type IV major fimbrial protein FimA (fimA) from Dichelobacter nodosus (Bacteroides nodosus).